An 81-amino-acid chain; its full sequence is Acyl carrier protein (81 aa).

Positions 1–79 constitute a Carrier domain; the sequence is MDVAAMQVKI…DIFDYLAKNK (79 aa). At Ser-39 the chain carries O-(pantetheine 4'-phosphoryl)serine.

This sequence belongs to the acyl carrier protein (ACP) family. 4'-phosphopantetheine is transferred from CoA to a specific serine of apo-ACP by AcpS. This modification is essential for activity because fatty acids are bound in thioester linkage to the sulfhydryl of the prosthetic group.

The protein localises to the cytoplasm. It functions in the pathway lipid metabolism; fatty acid biosynthesis. In terms of biological role, carrier of the growing fatty acid chain in fatty acid biosynthesis. The protein is Acyl carrier protein of Syntrophobacter fumaroxidans (strain DSM 10017 / MPOB).